The sequence spans 522 residues: Putative glucosylceramidase 3 (522 aa).

An N-terminal signal peptide occupies residues 1 to 21 (MSRWKVVILCLLSFMFEIGHA). Glu259 functions as the Proton donor in the catalytic mechanism. The active-site Nucleophile is the Glu364.

The protein belongs to the glycosyl hydrolase 30 family.

It carries out the reaction a beta-D-glucosylceramide + H2O = an N-acyl-sphingoid base + D-glucose. The enzyme catalyses a beta-D-glucosyl-(1&lt;-&gt;1')-N-acylsphing-4-enine + H2O = an N-acylsphing-4-enine + D-glucose. The catalysed reaction is an N-acyl-1-beta-D-glucosyl-15-methylhexadecasphing-4-enine + H2O = an N-acyl-15-methylhexadecasphing-4-enine + D-glucose. It functions in the pathway lipid metabolism; sphingolipid metabolism. In terms of biological role, glucosylceramidase that catalyzes the hydrolysis of glucosylceramides into free ceramides and glucose. C.elegans contain specific sphingoid bases, which are unique or different in structure compared to the sphingoid bases found in other animals. Two examples of these distinctive compounds are: 15-methylhexadecasphinganine and 15-methylhexadecasphing-4-enine. The sequence is that of Putative glucosylceramidase 3 from Caenorhabditis elegans.